We begin with the raw amino-acid sequence, 181 residues long: uncharacterized protein (181 aa).

A Nudix hydrolase domain is found at 35 to 175 (LRHRCVFVWA…ARLRAWRGAS (141 aa)). The short motif at 72-94 (GGVVGAGESYDDAALREAEEELG) is the Nudix box element. The Mg(2+) site is built by E88 and E92.

Belongs to the Nudix hydrolase family. The cofactor is Mg(2+).

This is an uncharacterized protein from Streptomyces coelicolor (strain ATCC BAA-471 / A3(2) / M145).